The following is a 692-amino-acid chain: Proprotein convertase subtilisin/kexin type 9 (692 aa).

The signal sequence occupies residues 1 to 30 (MGTVSSRRSWWPLPLPLLLLLLLGLAGARA). A propeptide spanning residues 31–152 (QEDEDGDYEE…IEEDSSVFAQ (122 aa)) is cleaved from the precursor. Sulfotyrosine is present on tyrosine 38. A Phosphoserine modification is found at serine 47. The 73-residue stretch at 77 to 149 (TYVVVLKEET…VDYIEEDSSV (73 aa)) folds into the Inhibitor I9 domain. The Peptidase S8 domain occupies 155-444 (PWNLERITPA…VLTPNLVAAL (290 aa)). Active-site charge relay system residues include aspartate 186 and histidine 226. 2 cysteine pairs are disulfide-bonded: cysteine 223-cysteine 255 and cysteine 323-cysteine 358. The active-site Charge relay system is serine 386. Residues 450–692 (RAGWQLFCRT…HLVQASQELQ (243 aa)) form a C-terminal domain region. 3 cysteine pairs are disulfide-bonded: cysteine 457-cysteine 527, cysteine 477-cysteine 526, and cysteine 486-cysteine 509. N-linked (GlcNAc...) asparagine glycosylation occurs at asparagine 533. 6 cysteine pairs are disulfide-bonded: cysteine 534-cysteine 601, cysteine 552-cysteine 600, cysteine 562-cysteine 588, cysteine 608-cysteine 679, cysteine 626-cysteine 678, and cysteine 635-cysteine 654. The residue at position 688 (serine 688) is a Phosphoserine.

It belongs to the peptidase S8 family. Monomer. Can self-associate to form dimers and higher multimers which may have increased LDLR degrading activity. The precursor protein but not the mature protein may form multimers. Interacts with APOB, VLDLR, LRP8/APOER2 and BACE1. The full-length immature form (pro-PCSK9) interacts with SCNN1A, SCNN1B and SCNN1G. The pro-PCSK9 form (via C-terminal domain) interacts with LDLR. Interacts (via the C-terminal domain) with ANXA2 (via repeat Annexin 1); the interaction inhibits the degradation of LDLR. Ca(2+) is required as a cofactor. Cleavage by furin and PCSK5 generates a truncated inactive protein that is unable to induce LDLR degradation. Post-translationally, undergoes autocatalytic cleavage in the endoplasmic reticulum to release the propeptide from the N-terminus and the cleavage of the propeptide is strictly required for its maturation and activation. The cleaved propeptide however remains associated with the catalytic domain through non-covalent interactions, preventing potential substrates from accessing its active site. As a result, it is secreted from cells as a propeptide-containing, enzymatically inactive protein. In terms of processing, phosphorylation protects the propeptide against proteolysis.

The protein resides in the cytoplasm. Its subcellular location is the secreted. It is found in the endosome. The protein localises to the lysosome. It localises to the cell surface. The protein resides in the endoplasmic reticulum. Its subcellular location is the golgi apparatus. Its proteolytic activity is autoinhibited by the non-covalent binding of the propeptide to the catalytic domain. Inhibited by EGTA. Crucial player in the regulation of plasma cholesterol homeostasis. Binds to low-density lipid receptor family members: low density lipoprotein receptor (LDLR), very low density lipoprotein receptor (VLDLR), apolipoprotein E receptor (LRP1/APOER) and apolipoprotein receptor 2 (LRP8/APOER2), and promotes their degradation in intracellular acidic compartments. Acts via a non-proteolytic mechanism to enhance the degradation of the hepatic LDLR through a clathrin LDLRAP1/ARH-mediated pathway. May prevent the recycling of LDLR from endosomes to the cell surface or direct it to lysosomes for degradation. Can induce ubiquitination of LDLR leading to its subsequent degradation. Inhibits intracellular degradation of APOB via the autophagosome/lysosome pathway in a LDLR-independent manner. Involved in the disposal of non-acetylated intermediates of BACE1 in the early secretory pathway. Inhibits epithelial Na(+) channel (ENaC)-mediated Na(+) absorption by reducing ENaC surface expression primarily by increasing its proteasomal degradation. Regulates neuronal apoptosis via modulation of LRP8/APOER2 levels and related anti-apoptotic signaling pathways. The sequence is that of Proprotein convertase subtilisin/kexin type 9 (PCSK9) from Colobus guereza (Mantled guereza).